A 300-amino-acid chain; its full sequence is MQSTLSQSPGSRFSQYMALTKPRVTQLAVFCAVIGMFLATPGMVPWHVLIGGTVGIWLLAGAAFAINCLVEQKIDAMMRRTAWRPSARGEITTPQILIFSAVLGSVGAWTLYTFTNPLTMWLTIATFVGYAVIYTLLLKPMTPQNIVIGGASGAMPPALGWAAVTGAVPGDAWILVLIIFVWTPPHFWVLALYRRKDYENAGLPMLPVTHGEKFTRLHILLYTVILFAVTLMPFISGMSGAVYLTSAVLLGAVFLAYAWKIHRDYSDELARKAFRYSIVYLSLLFAALLVDHYARPLLGV.

9 helical membrane-spanning segments follow: residues 24–44 (VTQLAVFCAVIGMFLATPGMV), 46–66 (WHVLIGGTVGIWLLAGAAFAI), 94–114 (PQILIFSAVLGSVGAWTLYTF), 118–138 (LTMWLTIATFVGYAVIYTLLL), 146–166 (IVIGGASGAMPPALGWAAVTG), 172–192 (AWILVLIIFVWTPPHFWVLAL), 217–237 (LHILLYTVILFAVTLMPFISG), 239–259 (SGAVYLTSAVLLGAVFLAYAW), and 278–298 (IVYLSLLFAALLVDHYARPLL).

The protein belongs to the UbiA prenyltransferase family. Protoheme IX farnesyltransferase subfamily.

The protein localises to the cell inner membrane. The enzyme catalyses heme b + (2E,6E)-farnesyl diphosphate + H2O = Fe(II)-heme o + diphosphate. Its pathway is porphyrin-containing compound metabolism; heme O biosynthesis; heme O from protoheme: step 1/1. Converts heme B (protoheme IX) to heme O by substitution of the vinyl group on carbon 2 of heme B porphyrin ring with a hydroxyethyl farnesyl side group. In Burkholderia lata (strain ATCC 17760 / DSM 23089 / LMG 22485 / NCIMB 9086 / R18194 / 383), this protein is Protoheme IX farnesyltransferase.